A 57-amino-acid polypeptide reads, in one-letter code: Large ribosomal subunit protein bL32 (57 aa).

The segment at 1 to 21 (MAVPKRRTSKKVKNQRRTHKK) is disordered.

Belongs to the bacterial ribosomal protein bL32 family.

This chain is Large ribosomal subunit protein bL32, found in Oceanobacillus iheyensis (strain DSM 14371 / CIP 107618 / JCM 11309 / KCTC 3954 / HTE831).